The following is a 583-amino-acid chain: Undecaprenyl phosphate-alpha-4-amino-4-deoxy-L-arabinose arabinosyl transferase 2 (583 aa).

Residues 1 to 20 (MTSRIQMHRTSPPPAYGTSA) are disordered. Helical transmembrane passes span 42–62 (LLLV…GLWI), 113–135 (LFGV…YLIT), 145–165 (SFAA…AGYS), 166–186 (NLDP…WFAL), 209–229 (FMTK…PYMI), 241–261 (GLVA…SIHA), 290–310 (WWFY…LLPG), 321–341 (QAPT…FSLS), 345–365 (LPTY…SALI), 380–400 (SLLN…IQLT), 409–429 (MLGL…NLLP), and 440–460 (PALG…GFIV).

The protein belongs to the glycosyltransferase 83 family.

It localises to the cell inner membrane. It catalyses the reaction 4-amino-4-deoxy-alpha-L-arabinopyranosyl di-trans,octa-cis-undecaprenyl phosphate + lipid IVA = lipid IIA + di-trans,octa-cis-undecaprenyl phosphate.. It functions in the pathway lipopolysaccharide metabolism; 4-amino-4-deoxy-beta-L-arabinose-lipid A biosynthesis. Catalyzes the transfer of the L-Ara4N moiety of the glycolipid undecaprenyl phosphate-alpha-L-Ara4N to lipid A. The modified arabinose is attached to lipid A and is required for resistance to polymyxin and cationic antimicrobial peptides. The sequence is that of Undecaprenyl phosphate-alpha-4-amino-4-deoxy-L-arabinose arabinosyl transferase 2 from Pseudomonas fluorescens (strain ATCC BAA-477 / NRRL B-23932 / Pf-5).